A 474-amino-acid chain; its full sequence is Probable fucosyltransferase 9 (474 aa).

The helical; Signal-anchor for type II membrane protein transmembrane segment at 1–21 threads the bilayer; sequence MIKLTIAIATCLVLCLVLLLP. Topologically, residues 22 to 474 are lumenal; that stretch reads SSNISYRHKY…LKLVDVSDEL (453 aa). Asn24, Asn39, and Asn208 each carry an N-linked (GlcNAc...) asparagine glycan.

The protein belongs to the glycosyltransferase 37 family. Expressed in leaves and stems.

Its subcellular location is the golgi apparatus. The protein localises to the golgi stack membrane. It functions in the pathway protein modification; protein glycosylation. Its function is as follows. May be involved in cell wall biosynthesis. May act as a fucosyltransferase. This Arabidopsis thaliana (Mouse-ear cress) protein is Probable fucosyltransferase 9 (FUT9).